A 259-amino-acid polypeptide reads, in one-letter code: Ubiquinone/menaquinone biosynthesis C-methyltransferase UbiE (259 aa).

S-adenosyl-L-methionine contacts are provided by residues T82, D103, 131–132 (NA), and S148.

This sequence belongs to the class I-like SAM-binding methyltransferase superfamily. MenG/UbiE family.

The catalysed reaction is a 2-demethylmenaquinol + S-adenosyl-L-methionine = a menaquinol + S-adenosyl-L-homocysteine + H(+). It catalyses the reaction a 2-methoxy-6-(all-trans-polyprenyl)benzene-1,4-diol + S-adenosyl-L-methionine = a 5-methoxy-2-methyl-3-(all-trans-polyprenyl)benzene-1,4-diol + S-adenosyl-L-homocysteine + H(+). It participates in quinol/quinone metabolism; menaquinone biosynthesis; menaquinol from 1,4-dihydroxy-2-naphthoate: step 2/2. It functions in the pathway cofactor biosynthesis; ubiquinone biosynthesis. Methyltransferase required for the conversion of demethylmenaquinol (DMKH2) to menaquinol (MKH2) and the conversion of 2-polyprenyl-6-methoxy-1,4-benzoquinol (DDMQH2) to 2-polyprenyl-3-methyl-6-methoxy-1,4-benzoquinol (DMQH2). This Vibrio parahaemolyticus serotype O3:K6 (strain RIMD 2210633) protein is Ubiquinone/menaquinone biosynthesis C-methyltransferase UbiE.